Reading from the N-terminus, the 104-residue chain is Large ribosomal subunit protein uL24 (104 aa).

Belongs to the universal ribosomal protein uL24 family. In terms of assembly, part of the 50S ribosomal subunit.

One of two assembly initiator proteins, it binds directly to the 5'-end of the 23S rRNA, where it nucleates assembly of the 50S subunit. Functionally, one of the proteins that surrounds the polypeptide exit tunnel on the outside of the subunit. This is Large ribosomal subunit protein uL24 from Shewanella baltica (strain OS223).